A 131-amino-acid chain; its full sequence is Fumarate reductase subunit C (131 aa).

3 consecutive transmembrane segments (helical) span residues 30–50 (EGTA…LFAL), 57–77 (WAGF…LITL), and 109–129 (IIKS…FVAL).

Belongs to the FrdC family. As to quaternary structure, part of an enzyme complex containing four subunits: a flavoprotein (FrdA), an iron-sulfur protein (FrdB), and two hydrophobic anchor proteins (FrdC and FrdD).

It is found in the cell inner membrane. Its function is as follows. Two distinct, membrane-bound, FAD-containing enzymes are responsible for the catalysis of fumarate and succinate interconversion; fumarate reductase is used in anaerobic growth, and succinate dehydrogenase is used in aerobic growth. Anchors the catalytic components of the fumarate reductase complex to the cell inner membrane, binds quinones. This Shigella flexneri protein is Fumarate reductase subunit C.